Reading from the N-terminus, the 673-residue chain is DNA ligase (673 aa).

Residues 33–37, 82–83, and E114 each bind NAD(+); these read DAEYD and SL. The active-site N6-AMP-lysine intermediate is the K116. NAD(+)-binding residues include R137, E174, K291, and K315. Zn(2+)-binding residues include C409, C412, C427, and C433. The BRCT domain occupies 592 to 673; sequence AQEQPLAGLV…LINLLEQHNG (82 aa).

The protein belongs to the NAD-dependent DNA ligase family. LigA subfamily. The cofactor is Mg(2+). Requires Mn(2+) as cofactor.

It carries out the reaction NAD(+) + (deoxyribonucleotide)n-3'-hydroxyl + 5'-phospho-(deoxyribonucleotide)m = (deoxyribonucleotide)n+m + AMP + beta-nicotinamide D-nucleotide.. In terms of biological role, DNA ligase that catalyzes the formation of phosphodiester linkages between 5'-phosphoryl and 3'-hydroxyl groups in double-stranded DNA using NAD as a coenzyme and as the energy source for the reaction. It is essential for DNA replication and repair of damaged DNA. This is DNA ligase from Pseudoalteromonas translucida (strain TAC 125).